Consider the following 355-residue polypeptide: Homoserine O-succinyltransferase (355 aa).

Residue Cys-146 is the Acyl-thioester intermediate of the active site. Substrate is bound by residues Lys-167 and Ser-196. Residue His-239 is the Proton acceptor of the active site. Residue Glu-241 is part of the active site. Arg-253 lines the substrate pocket.

Belongs to the MetA family.

Its subcellular location is the cytoplasm. The enzyme catalyses L-homoserine + succinyl-CoA = O-succinyl-L-homoserine + CoA. The protein operates within amino-acid biosynthesis; L-methionine biosynthesis via de novo pathway; O-succinyl-L-homoserine from L-homoserine: step 1/1. Its function is as follows. Transfers a succinyl group from succinyl-CoA to L-homoserine, forming succinyl-L-homoserine. The polypeptide is Homoserine O-succinyltransferase (Methylococcus capsulatus (strain ATCC 33009 / NCIMB 11132 / Bath)).